Consider the following 327-residue polypeptide: Small ribosomal subunit protein RACK1 (327 aa).

7 WD repeats span residues 13–44, 61–91, 103–133, 148–180, 192–222, 233–262, and 293–323; these read AHTD…IVWK, GHSH…RLWD, GHTK…KLWN, GHRD…KVWN, GHTG…LLWD, EANS…KIWD, and RKVI…RVWG.

It belongs to the WD repeat G protein beta family. Ribosomal protein RACK1 subfamily.

The chain is Small ribosomal subunit protein RACK1 (GB1) from Brassica napus (Rape).